The primary structure comprises 459 residues: Septin-4 (459 aa).

S10, S49, S98, and S99 each carry phosphoserine. Disordered stretches follow at residues 18–52 (FVKD…SPDL) and 70–98 (SQQY…PYDS). In terms of domain architecture, Septin-type G spans 122 to 395 (KGFDFTLMVA…ENYRAQCIQS (274 aa)). The tract at residues 132-139 (GESGLGKS) is G1 motif. GTP-binding positions include 132 to 139 (GESGLGKS) and T166. Residues 189-192 (DTPG) form a G3 motif region. The segment at 270–273 (AKAD) is G4 motif. Position 271 to 279 (271 to 279 (KADTLTPSE)) interacts with GTP. Residue S306 is modified to Phosphoserine. GTP-binding residues include G329 and R344. Residues 410–430 (TRESGTDFPIPAVPPGTDPET) form a disordered region. At S413 the chain carries Phosphoserine. Phosphothreonine is present on T415. Residues 434 to 459 (IREKDEELRRMQEMLHKIQRQMKETH) are a coiled coil.

This sequence belongs to the TRAFAC class TrmE-Era-EngA-EngB-Septin-like GTPase superfamily. Septin GTPase family. In terms of assembly, septins polymerize into heterooligomeric protein complexes that form filaments, and can associate with cellular membranes, actin filaments and microtubules. GTPase activity is required for filament formation. Interacts with SEPTIN8. Component of a septin core octameric complex consisting of SEPTIN12, SEPTIN7, SEPTIN6 and SEPTIN2 or SEPTIN4 in the order 12-7-6-2-2-6-7-12 or 12-7-6-4-4-6-7-12. Interacts with SEPTIN14 (via C-terminus). Interacts with DYRK1A. Interacts with SLC6A3/DAT and SNCA/alpha-synuclein. Interacts with STX1A; in the striatum. Interacts with XIAP (via BIR3 domain) following the induction of apoptosis. Interacts with AREL1 (via HECT domain); in the cytoplasm following induction of apoptosis. Phosphorylated by DYRK1A.

Its subcellular location is the cytoplasm. The protein resides in the cell projection. It is found in the cilium. The protein localises to the flagellum. It localises to the cytoplasmic vesicle. Its subcellular location is the secretory vesicle. The protein resides in the axon. It is found in the dendrite. The protein localises to the perikaryon. Its function is as follows. Filament-forming cytoskeletal GTPase. Pro-apoptotic protein involved in LGR5-positive intestinal stem cell and Paneth cell expansion in the intestines, via its interaction with XIAP. May also play a role in the regulation of cell fate in the intestine. Positive regulator of apoptosis involved in hematopoietic stem cell homeostasis; via its interaction with XIAP. Negative regulator of repair and hair follicle regeneration in response to injury, due to inhibition of hair follicle stem cell proliferation, potentially via its interaction with XIAP. Plays an important role in male fertility and sperm motility. During spermiogenesis, essential for the establishment of the annulus (a fibrous ring structure connecting the midpiece and the principal piece of the sperm flagellum) which is a requisite for the structural and mechanical integrity of the sperm. Involved in the migration of cortical neurons and the formation of neuron leading processes during embryonic development. Required for dopaminergic metabolism in presynaptic autoreceptors; potentially via activity as a presynaptic scaffold protein. This Rattus norvegicus (Rat) protein is Septin-4.